A 1433-amino-acid polypeptide reads, in one-letter code: MWSLTASEGESTTAHFFLGAGDEGLGTRGIGMRPEESDSELLEDEEDEVPPEPQIIVGICAMTKKSKSKPMTQILERLCRFDYLTVVILGEDVILNEPVENWPSCHCLISFHSKGFPLDKAVAYSKLRNPFLINDLAMQYYIQDRREVYRILQEEGIDLPRYAVLNRDPARPEECNLIEGEDQVEVNGAVFPKPFVEKPVSAEDHNVYIYYPSSAGGGSQRLFRKIGSRSSVYSPESSVRKTGSYIYEEFMPTDGTDVKVYTVGPDYAHAEARKSPALDGKVERDSEGKEIRYPVMLTAMEKLVARKVCVAFKQTVCGFDLLRANGHSFVCDVNGFSFVKNSMKYYDDCAKILGNTIMRELAPQFQIPWSIPTEAEDIPIVPTTSGTMMELRCVIAIIRHGDRTPKQKMKMEVKHPRFFALFEKHGGYKTGKLKLKRPEQLQEVLDITRLLLAELEKEPGGEIEEKTGKLEQLKSVLEMYGHFSGINRKVQLTYYPHGVKASNEGQDPQRETLAPSLLLVLKWGGELTPAGRVQAEELGRAFRCMYPGGQGDYAGFPGCGLLRLHSTFRHDLKIYASDEGRVQMTAAAFAKGLLALEGELTPILVQMVKSANMNGLLDSDGDSLSSCQHRVKARLHHILQQDAPFGPEDYDQLAPTRSTSLLNSMTIIQNPVKVCDQVFALIENLTHQIRERMQDPRSVDLQLYHSETLELMLQRWSKLERDFRQKSGRYDISKIPDIYDCVKYDVQHNGSLGLQGTAELLRLSKALADVVIPQEYGISREEKLEIAVGFCLPLLRKILLDLQRTHEDESVNKLHPLCYLRYSRGVLSPGRHVRTRLYFTSESHVHSLLSVFRYGGLLDETQDAQWQRALDYLSAISELNYMTQIVIMLYEDNTQDPLSEERFHVELHFSPGVKGVEEEGSAPAGCGFRPASSENEEMKTNQGSMENLCPGKASDEPDRALQTSPQPPEGPGLPRRSPLIRNRKAGSMEVLSETSSSRPGGYRLFSSSRPPTEMKQSGLGSQCTGLFSTTVLGGSSSAPNLQDYARSHGKKLPPASLKHRDELLFVPAVKRFSVSFAKHPTNGFEGCSMVPTIYPLETLHNALSLRQVSEFLSRVCQRHTDAQAQASAALFDSMHSSQASDNPFSPPRTLHSPPLQLQQRSEKPPWYSSGPSSTVSSAGPSSPTTVDGNSQFGFSDQPSLNSHVAEEHQGLGLLQETPGSGAQELSIEGEQELFEPNQSPQVPPMETSQPYEEVSQPCQEVPDISQPCQDISEALSQPCQKVPDISQQCQENHDNGNHTCQEVPHISQPCQKSSQLCQKVSEEVCQLCLENSEEVSQPCQGVSVEVGKLVHKFHVGVGSLVQETLVEVGSPAEEIPEEVIQPYQEFSVEVGRLAQETSAINLLSQGIPEIDKPSQEFPEEIDLQAQEVPEEIN.

Residue 64–65 participates in substrate binding; sequence KK. ATP-binding positions include R145, K198, H205, R224, 248–251, and 257–259; these read EEFM and DVK. 224–225 provides a ligand contact to substrate; sequence RK. Substrate is bound by residues K259 and R273. Residues S275, D320, and 332–334 each bind ATP; that span reads DVN. Residue 337–340 participates in substrate binding; the sequence is SFVK. The tract at residues 382–453 is polyphosphoinositide-binding domain; it reads PTTSGTMMEL…VLDITRLLLA (72 aa). Positions 915–1020 are disordered; sequence GVEEEGSAPA…PTEMKQSGLG (106 aa). Phosphoserine occurs at positions 944 and 987. Polar residues predominate over residues 1005-1020; that stretch reads FSSSRPPTEMKQSGLG. Phosphoserine is present on residues S1037 and S1073. Positions 1134–1143 are enriched in polar residues; it reads MHSSQASDNP. 2 disordered regions span residues 1134–1199 and 1235–1257; these read MHSS…DQPS and EPNQSPQVPPMETSQPYEEVSQP. Phosphoserine occurs at positions 1145 and 1152. A compositionally biased stretch (low complexity) spans 1168–1186; sequence SSGPSSTVSSAGPSSPTTV. Polar residues-rich tracts occupy residues 1187 to 1199 and 1236 to 1250; these read DGNSQFGFSDQPS and PNQSPQVPPMETSQP.

This sequence belongs to the histidine acid phosphatase family. VIP1 subfamily. As to expression, widely expressed, with a higher expression in skeletal muscle, heart and brain.

Its subcellular location is the cytoplasm. The protein localises to the cytosol. It localises to the cell membrane. The catalysed reaction is 1D-myo-inositol hexakisphosphate + ATP = 1-diphospho-1D-myo-inositol 2,3,4,5,6-pentakisphosphate + ADP. It catalyses the reaction 5-diphospho-1D-myo-inositol 1,2,3,4,6-pentakisphosphate + ATP + H(+) = 1,5-bis(diphospho)-1D-myo-inositol 2,3,4,6-tetrakisphosphate + ADP. Its function is as follows. Bifunctional inositol kinase that acts in concert with the IP6K kinases IP6K1, IP6K2 and IP6K3 to synthesize the diphosphate group-containing inositol pyrophosphates diphosphoinositol pentakisphosphate, PP-InsP5, and bis-diphosphoinositol tetrakisphosphate, (PP)2-InsP4. PP-InsP5 and (PP)2-InsP4, also respectively called InsP7 and InsP8, regulate a variety of cellular processes, including apoptosis, vesicle trafficking, cytoskeletal dynamics, exocytosis, insulin signaling and neutrophil activation. Phosphorylates inositol hexakisphosphate (InsP6) at position 1 to produce PP-InsP5 which is in turn phosphorylated by IP6Ks to produce (PP)2-InsP4. Alternatively, phosphorylates PP-InsP5 at position 1, produced by IP6Ks from InsP6, to produce (PP)2-InsP4. Activated when cells are exposed to hyperosmotic stress. The polypeptide is Inositol hexakisphosphate and diphosphoinositol-pentakisphosphate kinase 1 (Homo sapiens (Human)).